We begin with the raw amino-acid sequence, 204 residues long: uncharacterized protein (204 aa).

The first 17 residues, 1 to 17 (MKRLVTGLLALSLFLAA), serve as a signal peptide directing secretion. The disordered stretch occupies residues 17–100 (ACGQDSDQQK…NNNQANNNQK (84 aa)). C18 carries N-palmitoyl cysteine lipidation. The S-diacylglycerol cysteine moiety is linked to residue C18. Positions 23–70 (DQQKDGNKEKDDKAKTEQQDKKTNDSSKDKKDNKDDSKDVNKDNKDNS) are enriched in basic and acidic residues. Over residues 71-100 (ANDNQQQSNSNATNNDQNQTNNNQANNNQK) the composition is skewed to low complexity.

It localises to the cell membrane. This is an uncharacterized protein from Staphylococcus aureus (strain MSSA476).